The chain runs to 276 residues: Formamidopyrimidine-DNA glycosylase (276 aa).

The active-site Schiff-base intermediate with DNA is the Pro2. The Proton donor role is filled by Glu3. Catalysis depends on Lys59, which acts as the Proton donor; for beta-elimination activity. Residues His93, Arg112, and Arg155 each contribute to the DNA site. An FPG-type zinc finger spans residues 240–274; that stretch reads QVYNREGKPCPRCGDKIAKKKVGGRSSYYCPTCQK. Arg264 serves as the catalytic Proton donor; for delta-elimination activity.

It belongs to the FPG family. As to quaternary structure, monomer. The cofactor is Zn(2+).

It catalyses the reaction Hydrolysis of DNA containing ring-opened 7-methylguanine residues, releasing 2,6-diamino-4-hydroxy-5-(N-methyl)formamidopyrimidine.. It carries out the reaction 2'-deoxyribonucleotide-(2'-deoxyribose 5'-phosphate)-2'-deoxyribonucleotide-DNA = a 3'-end 2'-deoxyribonucleotide-(2,3-dehydro-2,3-deoxyribose 5'-phosphate)-DNA + a 5'-end 5'-phospho-2'-deoxyribonucleoside-DNA + H(+). Functionally, involved in base excision repair of DNA damaged by oxidation or by mutagenic agents. Acts as a DNA glycosylase that recognizes and removes damaged bases. Has a preference for oxidized purines, such as 7,8-dihydro-8-oxoguanine (8-oxoG). Has AP (apurinic/apyrimidinic) lyase activity and introduces nicks in the DNA strand. Cleaves the DNA backbone by beta-delta elimination to generate a single-strand break at the site of the removed base with both 3'- and 5'-phosphates. The chain is Formamidopyrimidine-DNA glycosylase from Pelotomaculum thermopropionicum (strain DSM 13744 / JCM 10971 / SI).